The primary structure comprises 282 residues: F-box protein VBF (282 aa).

The F-box domain occupies methionine 1 to phenylalanine 44.

In terms of assembly, component of SCF(VBF) E3 ubiquitin ligase complex that interacts with VIP1. Interacts directly with SKP1A and VIP1. Forms a complex composed of VIP1, VBF and Agrobacterium virE2.

Component of SCF(VBF) E3 ubiquitin ligase complexes, which mediate the ubiquitination and subsequent proteasomal degradation of target proteins such as VIP1 and Agrobacterium virE2, after their implication in T-DNA translocation to the host nucleus (can functionally replace Agrobacterium VirF). Required during Agrobacterium-induced tumor formation. In Arabidopsis thaliana (Mouse-ear cress), this protein is F-box protein VBF (VBF).